We begin with the raw amino-acid sequence, 1488 residues long: Eukaryotic translation initiation factor 4G (1488 aa).

Disordered stretches follow at residues 196–320 (VQHR…GQTS), 337–367 (DSEKVDLTSKVSGLTSATSESSISPILGKSE), and 415–707 (THQI…MTEA). 2 stretches are compositionally biased toward basic and acidic residues: residues 216–244 (VSEKESKAPSIPEKHSKESKAPSAVEKHP) and 274–299 (ADEKKESLPMTDSLKDNKKNATRNDT). Polar residues-rich tracts occupy residues 300 to 310 (KNLPQQPQSAS), 345 to 360 (SKVSGLTSATSESSIS), 448 to 464 (SLATSKPGNSDATSFVT), and 473 to 495 (CTTSVPEDHSLMNTSHNKDTQTL). Over residues 496–520 (SASVDASDVSEVNSGTSSESTSQST) the composition is skewed to low complexity. The segment covering 555–566 (QVKHADGAKDES) has biased composition (basic and acidic residues). Positions 627–646 (QEQSESVATSDGADSSSTVD) are enriched in polar residues. Over residues 651-671 (LPEESEREVMCEDDGKKKVEP) the composition is skewed to basic and acidic residues. A compositionally biased stretch (polar residues) spans 683–696 (PKLQSSDSGNQASA). Residues 709-721 (GRKKYSRDFLLTF) are EIF4E-binding. A compositionally biased stretch (basic and acidic residues) spans 753-784 (DREPHPSSARGSDRPTSRGDRRGPAMDDDKWL). Disordered stretches follow at residues 753–795 (DREP…PNRD), 974–1000 (RGEREEAEADKTEEEGEIKQTKEEREE), and 1107–1299 (WQQR…SEEE). The MIF4G domain maps to 883 to 1106 (QRQLKAILNK…RDSIDLRKNK (224 aa)). The span at 978–989 (EEAEADKTEEEG) shows a compositional bias: acidic residues. 4 stretches are compositionally biased toward basic and acidic residues: residues 990–1000 (EIKQTKEEREE), 1111–1132 (RKVDGPKKIDEVHRDAAQERHA), 1181–1191 (IRYEQERHQFD), and 1254–1267 (TREDTSSRIPDRFS). Over residues 1273–1294 (AAQSASSSHRPASQEGRSGNKS) the composition is skewed to polar residues. Residues 1299–1423 (ELREKSIATI…VLQDVGKLIE (125 aa)) enclose the MI domain.

The protein belongs to the eukaryotic initiation factor 4G family. EIF4F is a multi-subunit complex, the composition of which varies with external and internal environmental conditions. It is composed of at least EIF4A, EIF4E and EIF4G. In higher plants two isoforms of EIF4F have been identified, named isoform EIF4F and isoform EIF(iso)4F. Isoform EIF4F has subunits p220 and p26, whereas isoform EIF(iso)4F has subunits p82 and p28.

Component of the protein complex eIF4F, which is involved in the recognition of the mRNA cap, ATP-dependent unwinding of 5'-terminal secondary structure and recruitment of mRNA to the ribosome. The protein is Eukaryotic translation initiation factor 4G of Triticum aestivum (Wheat).